The sequence spans 254 residues: Hydroxypyruvate/pyruvate aldolase (254 aa).

H47 (proton acceptor) is an active-site residue. A divalent metal cation-binding residues include E151 and D177.

Belongs to the HpcH/HpaI aldolase family. Requires a divalent metal cation as cofactor.

The catalysed reaction is D-glyceraldehyde + pyruvate = 2-dehydro-3-deoxy-L-galactonate. In terms of biological role, aldolase which can catalyze in vitro the aldolisation reaction between hydroxypyruvate (HPA) or pyruvate (PA) and D-glyceraldehyde (D-GA). The condensation of pyruvate and D-glyceraldehyde produces 2-dehydro-3-deoxy-L-galactonate as the major product. Has weak activity with hydroxypyruvate and D-glyceraldehyde. The sequence is that of Hydroxypyruvate/pyruvate aldolase from Chromohalobacter salexigens (strain ATCC BAA-138 / DSM 3043 / CIP 106854 / NCIMB 13768 / 1H11).